An 86-amino-acid chain; its full sequence is DNA-directed RNA polymerase subunit omega (86 aa).

Positions 67 to 76 are enriched in basic and acidic residues; the sequence is SAREHAKESQ. The segment at 67 to 86 is disordered; sequence SAREHAKESQVSEEEVREES. Residues 77–86 are compositionally biased toward acidic residues; sequence VSEEEVREES.

It belongs to the RNA polymerase subunit omega family. The RNAP catalytic core consists of 2 alpha, 1 beta, 1 beta' and 1 omega subunit. When a sigma factor is associated with the core the holoenzyme is formed, which can initiate transcription.

It catalyses the reaction RNA(n) + a ribonucleoside 5'-triphosphate = RNA(n+1) + diphosphate. Functionally, promotes RNA polymerase assembly. Latches the N- and C-terminal regions of the beta' subunit thereby facilitating its interaction with the beta and alpha subunits. This is DNA-directed RNA polymerase subunit omega from Nitrosococcus oceani (strain ATCC 19707 / BCRC 17464 / JCM 30415 / NCIMB 11848 / C-107).